The sequence spans 816 residues: tRNA(Met) cytidine acetyltransferase TmcA (816 aa).

The ATP site is built by glutamine 265 and arginine 439. The N-acetyltransferase domain occupies 469–664; sequence ELIRKMEVYL…YTAIVIKPIS (196 aa). Acetyl-CoA is bound by residues 589-591, glutamate 629, and arginine 636; that span reads IAT.

The protein belongs to the TmcA family.

The protein resides in the cytoplasm. The enzyme catalyses cytidine(34) in elongator tRNA(Met) + acetyl-CoA + ATP + H2O = N(4)-acetylcytidine(34) in elongator tRNA(Met) + ADP + phosphate + CoA + H(+). The catalysed reaction is a cytidine in RNA + acetyl-CoA + ATP + H2O = an N(4)-acetylcytidine in RNA + ADP + phosphate + CoA + H(+). It carries out the reaction a cytidine in tRNA + acetyl-CoA + ATP + H2O = an N(4)-acetylcytidine in tRNA + ADP + phosphate + CoA + H(+). It catalyses the reaction a cytidine in mRNA + acetyl-CoA + ATP + H2O = an N(4)-acetylcytidine in mRNA + ADP + phosphate + CoA + H(+). Functionally, catalyzes the formation of N(4)-acetylcytidine (ac(4)C) at the wobble position of tRNA(Met), by using acetyl-CoA as an acetyl donor and ATP (or GTP). Its function is as follows. Catalyzes the formation of 233 N(4)-acetylcytidine (ac(4)C) sites in RNA, on the middle C of a CCG motif. Modifications are found in rRNA, ncRNA, mRNA and tRNA. More acetylation is observed at 85 than at 65 or 75 degrees Celsius. This is tRNA(Met) cytidine acetyltransferase TmcA from Pyrococcus furiosus (strain ATCC 43587 / DSM 3638 / JCM 8422 / Vc1).